The following is a 546-amino-acid chain: Chaperonin GroEL (546 aa).

ATP contacts are provided by residues 30–33, Lys-51, 87–91, Gly-415, and Asp-495; these read TLGP and DGTTT.

Belongs to the chaperonin (HSP60) family. Forms a cylinder of 14 subunits composed of two heptameric rings stacked back-to-back. Interacts with the co-chaperonin GroES.

It is found in the cytoplasm. The enzyme catalyses ATP + H2O + a folded polypeptide = ADP + phosphate + an unfolded polypeptide.. Functionally, together with its co-chaperonin GroES, plays an essential role in assisting protein folding. The GroEL-GroES system forms a nano-cage that allows encapsulation of the non-native substrate proteins and provides a physical environment optimized to promote and accelerate protein folding. The polypeptide is Chaperonin GroEL (Brucella melitensis biotype 2 (strain ATCC 23457)).